The following is a 130-amino-acid chain: Small ribosomal subunit protein uS8 (130 aa).

Belongs to the universal ribosomal protein uS8 family. Part of the 30S ribosomal subunit. Contacts proteins S5 and S12.

Its function is as follows. One of the primary rRNA binding proteins, it binds directly to 16S rRNA central domain where it helps coordinate assembly of the platform of the 30S subunit. This Yersinia enterocolitica serotype O:8 / biotype 1B (strain NCTC 13174 / 8081) protein is Small ribosomal subunit protein uS8.